A 249-amino-acid polypeptide reads, in one-letter code: O-methyltransferase adaD (249 aa).

Positions 1-15 are enriched in low complexity; it reads MSSVTLTTTTTTTST. Residues 1-26 are disordered; that stretch reads MSSVTLTTTTTTTSTPPKPTPKDEPQ.

Belongs to the methyltransferase superfamily.

It carries out the reaction 2-acetyl-3,4a,8,10,11,12a-hexahydroxy-1,4,4a,5,12,12a-hexahydrotetracene-1,12-dione + S-adenosyl-L-methionine = TAN-1612 + S-adenosyl-L-homocysteine + H(+). It participates in secondary metabolite biosynthesis. O-methyltransferase; part of the gene cluster that mediates the biosynthesis of the linear tetracyclic TAN-1612 neuropeptide Y receptor antagonist. The decaketide backbone of TAN-1612 is synthesized by the non-reducing polyketide synthase adaA via condensation of one acetyl-CoA starter unit with 9 malonyl-CoA units. The FAD-dependent monooxygenase adaC then performs hydroxylation at C2 while the polaketide chain is still attached to the NRPKS adaA. The alpha-hydroxylation step at C2 appears to be crucial for the following C18-C1 Claisen cyclization and release of the C9-hydroxyl version of TAN-1612 from the NRPKS adaA, two steps performed by the lactamase-like protein adaB. Finally, the O-methyltransferase adaD performs the C9 O-methylation to complete the biosynthesis of TAN-1612. The sequence is that of O-methyltransferase adaD from Aspergillus niger (strain ATCC MYA-4892 / CBS 513.88 / FGSC A1513).